A 456-amino-acid polypeptide reads, in one-letter code: Bestrophin homolog 18 (456 aa).

Helical transmembrane passes span 29 to 49 (WSAI…VSAI), 83 to 103 (GFFI…IGFI), 234 to 254 (IIYP…GILA), and 267 to 287 (MIDL…MGWL). The segment at 416–456 (ASSSRSLERQRSPGSFRMETLTPGSPTNTPIEPIDKIDKKK) is disordered.

This sequence belongs to the anion channel-forming bestrophin (TC 1.A.46) family. Calcium-sensitive chloride channel subfamily. Forms oligomers.

It localises to the cell membrane. Its function is as follows. Forms chloride channels. The chain is Bestrophin homolog 18 (best-18) from Caenorhabditis elegans.